A 421-amino-acid polypeptide reads, in one-letter code: Probable pectate lyase C (421 aa).

Positions 1-19 (MQPLHTLLALLPLCRSTTA) are cleaved as a signal peptide. N-linked (GlcNAc...) asparagine glycans are attached at residues N164 and N201. The active site involves R204. The 36-residue stretch at 257–292 (NENFHGYVENNYYDPDQDGTLNGNELGVSSSNYGGM) folds into the EF-hand domain. Residues D270, D272, D274, T276, and E281 each contribute to the Ca(2+) site. The interval 353 to 376 (DFGGVGDLDGGETPTDTDGDGIPD) is disordered. Over residues 367-376 (TDTDGDGIPD) the composition is skewed to acidic residues.

It belongs to the polysaccharide lyase 1 family. It depends on Ca(2+) as a cofactor.

It is found in the secreted. The catalysed reaction is Eliminative cleavage of (1-&gt;4)-alpha-D-galacturonan to give oligosaccharides with 4-deoxy-alpha-D-galact-4-enuronosyl groups at their non-reducing ends.. Pectinolytic enzyme consist of four classes of enzymes: pectin lyase, polygalacturonase, pectin methylesterase and rhamnogalacturonase. Among pectinolytic enzymes, pectin lyase is the most important in depolymerization of pectin, since it cleaves internal glycosidic bonds of highly methylated pectins. Favors pectate, the anion, over pectin, the methyl ester. The chain is Probable pectate lyase C (plyC) from Emericella nidulans (strain FGSC A4 / ATCC 38163 / CBS 112.46 / NRRL 194 / M139) (Aspergillus nidulans).